The following is a 198-amino-acid chain: Capsid protein (198 aa).

The protein resides in the virion. This is Capsid protein from Vitis vinifera (Grape).